The primary structure comprises 145 residues: Large ribosomal subunit protein uL11 (145 aa).

This sequence belongs to the universal ribosomal protein uL11 family. In terms of assembly, part of the ribosomal stalk of the 50S ribosomal subunit. Interacts with L10 and the large rRNA to form the base of the stalk. L10 forms an elongated spine to which L12 dimers bind in a sequential fashion forming a multimeric L10(L12)X complex. One or more lysine residues are methylated.

Functionally, forms part of the ribosomal stalk which helps the ribosome interact with GTP-bound translation factors. This chain is Large ribosomal subunit protein uL11, found in Sulfurihydrogenibium sp. (strain YO3AOP1).